The following is a 68-amino-acid chain: Protein SlyX homolog (68 aa).

It belongs to the SlyX family.

In Brucella suis (strain ATCC 23445 / NCTC 10510), this protein is Protein SlyX homolog.